Reading from the N-terminus, the 198-residue chain is MGQQFTNAEGEQTEIDVAELQEWYKKFVVECPSGTLFMHEFKRFFGVQDNHEAAEYIENMFRAFDKNGDNTIDFLEYVAALNLVLRGKLEHKLRWTFKVYDKDGNGCIDKPELLEIVESIYKLKKVCRSEVEERTPLLTPEEVVDRIFQLVDENGDGQLSLDEFIDGARKDKWVMKMLQMDVNPGGWISEQRRKSALF.

Residue Gly-2 is the site of N-myristoyl glycine attachment. 4 consecutive EF-hand domains span residues 16 to 51 (DVAELQEWYKKFVVECPSGTLFMHEFKRFFGVQDNH), 52 to 87 (EAAEYIENMFRAFDKNGDNTIDFLEYVAALNLVLRG), 88 to 123 (KLEHKLRWTFKVYDKDGNGCIDKPELLEIVESIYKL), and 139 to 174 (TPEEVVDRIFQLVDENGDGQLSLDEFIDGARKDKWV). The Ca(2+) site is built by Asp-65, Asn-67, Asp-69, Thr-71, Glu-76, Asp-101, Asp-103, Asn-105, Cys-107, Glu-112, Asp-152, Asn-154, Asp-156, Gln-158, and Glu-163.

Undergoes dimerization at low calcium ions concentration, while the presence of calcium ions inhibits its dimerization. Dimerization correlates with its ability to activate GC. As to expression, retina and pineal gland.

Its function is as follows. Stimulates synthesis of cGMP in photoreceptors. Thought to mediate Ca(2+)-sensitive regulation of retinal guanylyl cyclase (GC), a key event in recovery of the dark state of rod photoreceptors following light exposure. The polypeptide is Guanylyl cyclase-activating protein 2 (GUCA1B) (Gallus gallus (Chicken)).